Here is a 1833-residue protein sequence, read N- to C-terminus: Protein TIC 214 (1833 aa).

The next 6 membrane-spanning stretches (helical) occupy residues 18–38 (IINS…FSIG), 67–87 (FIMG…HLAL), 90–110 (PHTI…WNNH), 127–147 (LSIQ…YFIL), 175–195 (VGWL…LVWI), and 218–238 (IFSI…PSPI). The tract at residues 254–301 (EETNLEIEKTSETKETKQEEEGFTEEDPSPSLFSEEKEDPDKIDETEK) is disordered. Composition is skewed to basic and acidic residues over residues 259 to 273 (EIEK…KQEE) and 292 to 301 (DPDKIDETEK).

The protein belongs to the TIC214 family. Part of the Tic complex.

Its subcellular location is the plastid. The protein localises to the chloroplast inner membrane. Involved in protein precursor import into chloroplasts. May be part of an intermediate translocation complex acting as a protein-conducting channel at the inner envelope. The protein is Protein TIC 214 of Spinacia oleracea (Spinach).